A 1009-amino-acid chain; its full sequence is DENN domain-containing protein 2A (1009 aa).

4 disordered regions span residues 15-153, 171-334, 434-479, and 498-532; these read AEAS…LRFQ, KDGS…HRKS, KLLD…KKRK, and KRVK…LKAH. 4 stretches are compositionally biased toward basic and acidic residues: residues 45-59, 130-147, 218-247, and 275-284; these read NIKD…KKEV, QPER…EPRL, HPSD…DRSL, and HAGEGDKDGK. Residues 297–314 show a composition bias toward pro residues; sequence PPLPSLPPPPLPSSPPPS. Basic and acidic residues predominate over residues 434–443; that stretch reads KLLDTRKLSR. A compositionally biased stretch (polar residues) spans 503–513; sequence LSQSMESNSGK. Ser551 bears the Phosphoserine mark. Residues 566-715 form the uDENN domain; the sequence is EYFVVVSLHK…PFPALGKTIL (150 aa). A cDENN domain is found at 737–870; sequence RLEHVDFESL…LQVALEHILE (134 aa). The 98-residue stretch at 872 to 969 folds into the dDENN domain; that stretch reads RNELACEQDE…QERELRRQDA (98 aa).

It is found in the cytoplasm. It localises to the cytoskeleton. Functionally, guanine nucleotide exchange factor (GEF) which may activate RAB9A and RAB9B. Promotes the exchange of GDP to GTP, converting inactive GDP-bound Rab proteins into their active GTP-bound form. May play a role in late endosomes back to trans-Golgi network/TGN transport. The polypeptide is DENN domain-containing protein 2A (DENND2A) (Homo sapiens (Human)).